The following is a 454-amino-acid chain: MIYRKIIWGILYVTLMLFDTHRAQECEEMTDLNFKDSLAGTSLKVRLLLYTRADPSCGQLLSHQEPFSNSQFNVSSVTTFLIHGYRPTGSPPVWMKQFVEFLLNRRDMNVIVVDWNRGATNMNYWQVVKNTRKVANNLTDLIQKMKDNGANLSSIHMIGVSLGAHISGFTGANFNGEIGRITALDPAGPEFNGRPPEDRLDPSDALFVEALHTDMDALGYRNLLGHIDYYANGGADQPGCPKTILSGSEYFKCDHQRSVFLYMSSVNGSCPIIAYPCESYTDFQDGTCMDCGKFKSAGCPIFGYDSVRWRDTLVQLEQTRTYFQTNKASPFCKVGYKVDIVSWNQKTHWGYLTIKLSNGTEETQVELNHKSLKFERFQETSVLAQFERDIQPVKKITLKFCPRKGLRPRKKLRLLHIRLTPLQNHLRPLCRYDLLLEESKDVTFKPIPCEDSNF.

Positions 1 to 23 (MIYRKIIWGILYVTLMLFDTHRA) are cleaved as a signal peptide. Asn-73, Asn-137, and Asn-151 each carry an N-linked (GlcNAc...) asparagine glycan. The Nucleophile role is filled by Ser-161. Asp-185 (charge relay system) is an active-site residue. Cysteines 240 and 253 form a disulfide. The Charge relay system role is filled by His-255. An N-linked (GlcNAc...) asparagine glycan is attached at Asn-267. Disulfide bonds link Cys-277/Cys-288 and Cys-291/Cys-299. An N-linked (GlcNAc...) asparagine glycan is attached at Asn-358. An intrachain disulfide couples Cys-430 to Cys-449.

This sequence belongs to the AB hydrolase superfamily. Lipase family.

The protein localises to the secreted. It localises to the cell membrane. The catalysed reaction is 1-hexadecanoyl-2-(9Z-octadecenoyl)-sn-glycero-3-phosphate + H2O = 2-(9Z-octadecenoyl)-sn-glycero-3-phosphate + hexadecanoate + H(+). Hydrolyzes specifically phosphatidic acid (PA) to produce 2-acyl lysophosphatidic acid (LPA; a potent bioactive lipid mediator) and fatty acid. Does not hydrolyze other phospholipids, like phosphatidylserine (PS), phosphatidylcholine (PC) and phosphatidylethanolamine (PE) or triacylglycerol (TG). The protein is Lipase member H (liph) of Danio rerio (Zebrafish).